A 508-amino-acid polypeptide reads, in one-letter code: Flagellin (508 aa).

It belongs to the bacterial flagellin family.

It is found in the secreted. The protein localises to the bacterial flagellum. In terms of biological role, flagellin is the subunit protein which polymerizes to form the filaments of bacterial flagella. This Salmonella oranienberg protein is Flagellin (fliC).